A 116-amino-acid chain; its full sequence is U16-barytoxin-Tl1f (116 aa).

Residues 1–20 form the signal peptide; the sequence is MKTIIVFLSLLVLATKFGDA. Positions 21-74 are excised as a propeptide; the sequence is NEGVNQEQMKEVIQNEFREDFLNEMAPMSLLQQLEAIESTLLEKEADRNSRQKR. Cystine bridges form between Cys-75-Cys-90, Cys-82-Cys-95, and Cys-89-Cys-110. N-linked (GlcNAc...) asparagine glycosylation occurs at Asn-85.

This sequence belongs to the neurotoxin 14 (magi-1) family. 06 (ICK-Trit) subfamily. In terms of tissue distribution, expressed by the venom gland.

It localises to the secreted. Ion channel inhibitor. This Trittame loki (Brush-footed trapdoor spider) protein is U16-barytoxin-Tl1f.